A 168-amino-acid chain; its full sequence is Plastocyanin B, chloroplastic (168 aa).

Residues 1 to 69 (MAAVTSAAVS…SAMIASNAMA (69 aa)) constitute a chloroplast transit peptide. Positions 70-168 (VDVLLGADDG…AGMVGKVIVN (99 aa)) constitute a Plastocyanin-like domain. Cu cation contacts are provided by His-106, Cys-153, His-156, and Met-161.

The protein belongs to the plastocyanin family. Cu(2+) is required as a cofactor.

It localises to the plastid. The protein resides in the chloroplast thylakoid membrane. Its function is as follows. Participates in electron transfer between P700 and the cytochrome b6-f complex in photosystem I. The protein is Plastocyanin B, chloroplastic (PETE) of Populus nigra (Lombardy poplar).